We begin with the raw amino-acid sequence, 435 residues long: Zinc finger and BTB domain-containing protein 25 (435 aa).

Residues 1-107 (MDTASHSLVL…GIRFLHADYL (107 aa)) form the BTB domain. Glycyl lysine isopeptide (Lys-Gly) (interchain with G-Cter in SUMO2) cross-links involve residues Lys142, Lys148, Lys198, and Lys204. The C2H2-type 1 zinc-finger motif lies at 238-260 (HLCHYCGERFDSRSNLRQHLHTH). Glycyl lysine isopeptide (Lys-Gly) (interchain with G-Cter in SUMO2) cross-links involve residues Lys303 and Lys330. Residues 349–371 (MSCTICGHKFPRKSQLLEHMYTH) form a C2H2-type 2 zinc finger. Lys405 participates in a covalent cross-link: Glycyl lysine isopeptide (Lys-Gly) (interchain with G-Cter in SUMO2).

As to expression, expressed mainly in hematopoietic cells and testis.

The protein localises to the nucleus. In terms of biological role, may be involved in transcriptional regulation. In Homo sapiens (Human), this protein is Zinc finger and BTB domain-containing protein 25 (ZBTB25).